The chain runs to 547 residues: Glucose-6-phosphate isomerase (547 aa).

The active-site Proton donor is the glutamate 352. Active-site residues include histidine 383 and lysine 511.

This sequence belongs to the GPI family.

The protein localises to the cytoplasm. The catalysed reaction is alpha-D-glucose 6-phosphate = beta-D-fructose 6-phosphate. Its pathway is carbohydrate biosynthesis; gluconeogenesis. The protein operates within carbohydrate degradation; glycolysis; D-glyceraldehyde 3-phosphate and glycerone phosphate from D-glucose: step 2/4. Catalyzes the reversible isomerization of glucose-6-phosphate to fructose-6-phosphate. The chain is Glucose-6-phosphate isomerase from Rhodospirillum rubrum (strain ATCC 11170 / ATH 1.1.1 / DSM 467 / LMG 4362 / NCIMB 8255 / S1).